A 184-amino-acid polypeptide reads, in one-letter code: Large ribosomal subunit protein uL15 (184 aa).

Residues 1–45 (MNLSSLRPAKGSVRNKKRVGRGQGSGNGTTAGKGNKGQQARSGYK) are disordered. Residues 21–35 (RGQGSGNGTTAGKGN) show a composition bias toward gly residues.

The protein belongs to the universal ribosomal protein uL15 family. In terms of assembly, part of the 50S ribosomal subunit.

Functionally, binds to the 23S rRNA. In Chlorobium chlorochromatii (strain CaD3), this protein is Large ribosomal subunit protein uL15.